The chain runs to 377 residues: tRNA-specific 2-thiouridylase MnmA (377 aa).

ATP-binding positions include 18 to 25 and M44; that span reads GMSGGVDS. Residues 104-106 form an interaction with target base in tRNA region; it reads NPD. The active-site Nucleophile is the C109. C109 and C209 are oxidised to a cystine. G134 contacts ATP. Residues 159–161 are interaction with tRNA; sequence KDQ. Residue C209 is the Cysteine persulfide intermediate of the active site. Positions 324–325 are interaction with tRNA; it reads RY.

The protein belongs to the MnmA/TRMU family.

The protein resides in the cytoplasm. The enzyme catalyses S-sulfanyl-L-cysteinyl-[protein] + uridine(34) in tRNA + AH2 + ATP = 2-thiouridine(34) in tRNA + L-cysteinyl-[protein] + A + AMP + diphosphate + H(+). Functionally, catalyzes the 2-thiolation of uridine at the wobble position (U34) of tRNA, leading to the formation of s(2)U34. The chain is tRNA-specific 2-thiouridylase MnmA from Photobacterium profundum (strain SS9).